Reading from the N-terminus, the 411-residue chain is Dipeptidase 1 (411 aa).

The signal sequence occupies residues 1 to 16 (MWSGWWLWPLVAVCTA). Zn(2+) contacts are provided by H36 and D38. N-linked (GlcNAc...) asparagine glycosylation occurs at N57. Residues C87 and C170 are joined by a disulfide bond. E141 lines the Zn(2+) pocket. Position 168 (H168) interacts with substrate. Positions 214 and 235 each coordinate Zn(2+). A disulfide bridge connects residues C242 and C274. R246 is a binding site for substrate. The N-linked (GlcNAc...) asparagine glycan is linked to N279. D304 is a binding site for substrate. N-linked (GlcNAc...) asparagine glycosylation is found at N332 and N358. S385 is lipidated: GPI-anchor amidated serine. A propeptide spans 386–411 (GASSLHRHWGLLLASLAPLVLCLSLL) (removed in mature form).

This sequence belongs to the metallo-dependent hydrolases superfamily. Peptidase M19 family. In terms of assembly, homodimer; disulfide-linked. It depends on Zn(2+) as a cofactor. Expressed in lung and kidneys.

The protein localises to the apical cell membrane. The protein resides in the cell projection. It is found in the microvillus membrane. The enzyme catalyses an L-aminoacyl-L-amino acid + H2O = 2 an L-alpha-amino acid. It catalyses the reaction leukotriene D4 + H2O = leukotriene E4 + glycine. It carries out the reaction a beta-lactam + H2O = a substituted beta-amino acid. The catalysed reaction is L-cystine-bis-glycine + 2 H2O = L-cystine + 2 glycine. The enzyme catalyses glycyldehydrophenylalanine + H2O = 2,3-didehydrophenylalanine + glycine. With respect to regulation, inhibited by L-penicillamine. Beta-lactamase activity is inhibited by cilastatin. Its function is as follows. Hydrolyzes a wide range of dipeptides including the conversion of leukotriene D4 to leukotriene E4. Hydrolyzes cystinyl-bis-glycine (cys-bis-gly) formed during glutathione degradation. Also possesses beta lactamase activity and can hydrolyze the beta-lactam antibiotic imipenem. Functionally, independently of its dipeptidase activity, acts as an adhesion receptor for neutrophil recruitment from bloodstream into inflamed lungs and liver. The sequence is that of Dipeptidase 1 (DPEP1) from Homo sapiens (Human).